A 231-amino-acid chain; its full sequence is High-affinity zinc uptake system ATP-binding protein ZnuC (231 aa).

The region spanning 4–230 (VSLKDIVFGY…CLTWNSCDEL (227 aa)) is the ABC transporter domain.

This sequence belongs to the ABC transporter superfamily. In terms of assembly, the complex is composed of two ATP-binding proteins (ZnuC), two transmembrane proteins (ZnuB) and a solute-binding protein (ZnuA).

The protein resides in the cell membrane. It carries out the reaction Zn(2+)(out) + ATP(in) + H2O(in) = Zn(2+)(in) + ADP(in) + phosphate(in) + H(+)(in). In terms of biological role, part of the high-affinity ABC transporter complex ZnuABC involved in zinc import. Responsible for energy coupling to the transport system. ZnuABC-mediated zinc transport is required for comF expression and competence development. In Bacillus subtilis (strain 168), this protein is High-affinity zinc uptake system ATP-binding protein ZnuC (znuC).